The following is a 336-amino-acid chain: Tetraacyldisaccharide 4'-kinase (336 aa).

60-67 is a binding site for ATP; sequence TVGGTGKT.

This sequence belongs to the LpxK family.

The catalysed reaction is a lipid A disaccharide + ATP = a lipid IVA + ADP + H(+). The protein operates within glycolipid biosynthesis; lipid IV(A) biosynthesis; lipid IV(A) from (3R)-3-hydroxytetradecanoyl-[acyl-carrier-protein] and UDP-N-acetyl-alpha-D-glucosamine: step 6/6. Its function is as follows. Transfers the gamma-phosphate of ATP to the 4'-position of a tetraacyldisaccharide 1-phosphate intermediate (termed DS-1-P) to form tetraacyldisaccharide 1,4'-bis-phosphate (lipid IVA). The chain is Tetraacyldisaccharide 4'-kinase from Pseudomonas entomophila (strain L48).